The primary structure comprises 269 residues: Shikimate dehydrogenase (NADP(+)) (269 aa).

Residues 22–24 (TLS) and Thr68 each bind shikimate. The Proton acceptor role is filled by Lys72. Shikimate is bound by residues Asn93 and Asp104. NADP(+) contacts are provided by residues 128-132 (GAGGA), 152-157 (NRTNLR), and Phe210. Shikimate is bound at residue Tyr212. Gly233 serves as a coordination point for NADP(+).

It belongs to the shikimate dehydrogenase family. Homodimer.

The enzyme catalyses shikimate + NADP(+) = 3-dehydroshikimate + NADPH + H(+). It participates in metabolic intermediate biosynthesis; chorismate biosynthesis; chorismate from D-erythrose 4-phosphate and phosphoenolpyruvate: step 4/7. Its function is as follows. Involved in the biosynthesis of the chorismate, which leads to the biosynthesis of aromatic amino acids. Catalyzes the reversible NADPH linked reduction of 3-dehydroshikimate (DHSA) to yield shikimate (SA). The polypeptide is Shikimate dehydrogenase (NADP(+)) (Saccharolobus islandicus (strain Y.N.15.51 / Yellowstone #2) (Sulfolobus islandicus)).